We begin with the raw amino-acid sequence, 337 residues long: Anthranilate phosphoribosyltransferase (337 aa).

5-phospho-alpha-D-ribose 1-diphosphate contacts are provided by residues Gly-82, 85–86 (GD), Thr-90, 92–95 (NIST), 110–118 (KHGGRSVSS), and Ser-122. Anthranilate is bound at residue Gly-82. Ser-94 contributes to the Mg(2+) binding site. Arg-168 lines the anthranilate pocket. Mg(2+) is bound by residues Asp-226 and Glu-227.

Belongs to the anthranilate phosphoribosyltransferase family. As to quaternary structure, homodimer. The cofactor is Mg(2+).

It catalyses the reaction N-(5-phospho-beta-D-ribosyl)anthranilate + diphosphate = 5-phospho-alpha-D-ribose 1-diphosphate + anthranilate. It participates in amino-acid biosynthesis; L-tryptophan biosynthesis; L-tryptophan from chorismate: step 2/5. Its function is as follows. Catalyzes the transfer of the phosphoribosyl group of 5-phosphorylribose-1-pyrophosphate (PRPP) to anthranilate to yield N-(5'-phosphoribosyl)-anthranilate (PRA). The polypeptide is Anthranilate phosphoribosyltransferase (Francisella tularensis subsp. holarctica (strain OSU18)).